Consider the following 188-residue polypeptide: Elongation factor P (188 aa).

It belongs to the elongation factor P family.

It localises to the cytoplasm. It participates in protein biosynthesis; polypeptide chain elongation. In terms of biological role, involved in peptide bond synthesis. Stimulates efficient translation and peptide-bond synthesis on native or reconstituted 70S ribosomes in vitro. Probably functions indirectly by altering the affinity of the ribosome for aminoacyl-tRNA, thus increasing their reactivity as acceptors for peptidyl transferase. The polypeptide is Elongation factor P (Bradyrhizobium sp. (strain BTAi1 / ATCC BAA-1182)).